The following is a 399-amino-acid chain: Acetate kinase (399 aa).

Position 9 (N9) interacts with Mg(2+). Residue K16 participates in ATP binding. Residue R90 participates in substrate binding. D147 functions as the Proton donor/acceptor in the catalytic mechanism. ATP-binding positions include 207–211, 281–283, and 333–337; these read HLGNG, DFR, and GVGEN. E387 contributes to the Mg(2+) binding site.

Belongs to the acetokinase family. In terms of assembly, homodimer. Requires Mg(2+) as cofactor. Mn(2+) is required as a cofactor.

It localises to the cytoplasm. The enzyme catalyses acetate + ATP = acetyl phosphate + ADP. It participates in metabolic intermediate biosynthesis; acetyl-CoA biosynthesis; acetyl-CoA from acetate: step 1/2. In terms of biological role, catalyzes the formation of acetyl phosphate from acetate and ATP. Can also catalyze the reverse reaction. The protein is Acetate kinase of Mycobacterium sp. (strain KMS).